A 378-amino-acid polypeptide reads, in one-letter code: Alginate lyase (378 aa).

The first 28 residues, 1-28 (MQTPKLIRPTLLSMAIVSSMAWATGASA), serve as a signal peptide directing secretion. Residues 67–68 (SK), 140–141 (HT), and Y258 each bind substrate.

The protein belongs to the polysaccharide lyase 5 family.

It is found in the periplasm. It catalyses the reaction Eliminative cleavage of alginate to give oligosaccharides with 4-deoxy-alpha-L-erythro-hex-4-enuronosyl groups at their non-reducing ends and beta-D-mannuronate at their reducing end.. Functionally, catalyzes the depolymerization of alginate by cleaving the beta-1,4 glycosidic bond between two adjacent sugar residues via a beta-elimination mechanism. May serve to degrade mislocalized alginate that is trapped in the periplasmic space. The polypeptide is Alginate lyase (Pseudomonas syringae pv. tomato (strain ATCC BAA-871 / DC3000)).